A 652-amino-acid chain; its full sequence is Large subunit GTPase 1 homolog (652 aa).

The residue at position 93 (serine 93) is a Phosphoserine. The CP-type G domain maps to 164–438 (WRQLWRVIER…LCDCPGLVMP (275 aa)). 212–215 (NKAD) serves as a coordination point for GTP. A Phosphoserine modification is found at serine 252. The tract at residues 288-347 (LGEAASSEEDESEYEDCQEEEEDWQTCLEDSSSSDEEACGQDCKEGHTVDSEAQGRNTPQ) is disordered. The span at 293–311 (SSEEDESEYEDCQEEEEDW) shows a compositional bias: acidic residues. GTP is bound by residues 387–394 (GYPNVGKS) and 431–434 (DCPG). Positions 625 to 652 (RGAGKPWKKHGNRNKKEKSRRLYKHLDM) are disordered. Positions 630-652 (PWKKHGNRNKKEKSRRLYKHLDM) are enriched in basic residues.

This sequence belongs to the TRAFAC class YlqF/YawG GTPase family. LSG1 subfamily.

It localises to the cytoplasm. It is found in the endoplasmic reticulum. The protein localises to the nucleus. The protein resides in the cajal body. It carries out the reaction GTP + H2O = GDP + phosphate + H(+). Functions as a GTPase. May act by mediating the release of NMD3 from the 60S ribosomal subunit after export into the cytoplasm during the 60S ribosomal subunit maturation. The chain is Large subunit GTPase 1 homolog from Bos taurus (Bovine).